The sequence spans 159 residues: Regulatory protein RecX (159 aa).

This sequence belongs to the RecX family.

Its subcellular location is the cytoplasm. Modulates RecA activity. The protein is Regulatory protein RecX of Ralstonia pickettii (strain 12J).